The chain runs to 352 residues: Protein RecA (352 aa).

Residue 66-73 participates in ATP binding; sequence GPESSGKT. A disordered region spans residues 330–352; sequence TKDDSKVATVDKANEEQAAEPVQ.

It belongs to the RecA family.

The protein localises to the cytoplasm. Its function is as follows. Can catalyze the hydrolysis of ATP in the presence of single-stranded DNA, the ATP-dependent uptake of single-stranded DNA by duplex DNA, and the ATP-dependent hybridization of homologous single-stranded DNAs. It interacts with LexA causing its activation and leading to its autocatalytic cleavage. This is Protein RecA from Psychrobacter cryohalolentis (strain ATCC BAA-1226 / DSM 17306 / VKM B-2378 / K5).